Consider the following 390-residue polypeptide: Altered inheritance of mitochondria protein 6 (390 aa).

Residues 1 to 17 form the signal peptide; that stretch reads MLGLKGCLTILIGYVIA.

The protein belongs to the AIM6 family.

The polypeptide is Altered inheritance of mitochondria protein 6 (Saccharomyces cerevisiae (strain ATCC 204508 / S288c) (Baker's yeast)).